Reading from the N-terminus, the 258-residue chain is Protein SAWADEE HOMEODOMAIN HOMOLOG 1 (258 aa).

Residues A138–E244 are SAWADEE domain. Zn(2+)-binding residues include C191, H225, C230, and C232.

Associates with the RNA polymerase IV (Pol IV) complex. Interacts with NRPD1, NRPD2, NRPD3, NRPD3B, CLSY1 and CLSY2.

The protein localises to the nucleus. Involved in RNA-directed DNA methylation (RdDM). Required for the silencing of some endogenous RdDM targets and accumulation of 24-nt siRNAs, but not for the production of Pol V-dependent transcripts. Functions in transcriptional silencing through both DNA methylation-dependent and -independent pathways. Required for both maintenance and de-novo DNA methylation. Plays a role in the recruitment of Pol IV to genomic regions associated with K9 methylated histone H3 that are targets for RdDM. The sequence is that of Protein SAWADEE HOMEODOMAIN HOMOLOG 1 (SHH1) from Arabidopsis thaliana (Mouse-ear cress).